The primary structure comprises 277 residues: Large ribosomal subunit protein uL2 (277 aa).

The interval 223-277 (VVMNPIDHPHGGGEGRTSGGRHPVTPWGKPTKGKKTRSNKSTNKFILISRHKRKK) is disordered.

Belongs to the universal ribosomal protein uL2 family. Part of the 50S ribosomal subunit. Forms a bridge to the 30S subunit in the 70S ribosome.

Its function is as follows. One of the primary rRNA binding proteins. Required for association of the 30S and 50S subunits to form the 70S ribosome, for tRNA binding and peptide bond formation. It has been suggested to have peptidyltransferase activity; this is somewhat controversial. Makes several contacts with the 16S rRNA in the 70S ribosome. In Nitrobacter hamburgensis (strain DSM 10229 / NCIMB 13809 / X14), this protein is Large ribosomal subunit protein uL2.